Here is a 257-residue protein sequence, read N- to C-terminus: Thiazole synthase (257 aa).

Catalysis depends on lysine 96, which acts as the Schiff-base intermediate with DXP. 1-deoxy-D-xylulose 5-phosphate contacts are provided by residues glycine 157, 184 to 185, and 206 to 207; these read AG and NT.

It belongs to the ThiG family. Homotetramer. Forms heterodimers with either ThiH or ThiS.

The protein resides in the cytoplasm. It catalyses the reaction [ThiS sulfur-carrier protein]-C-terminal-Gly-aminoethanethioate + 2-iminoacetate + 1-deoxy-D-xylulose 5-phosphate = [ThiS sulfur-carrier protein]-C-terminal Gly-Gly + 2-[(2R,5Z)-2-carboxy-4-methylthiazol-5(2H)-ylidene]ethyl phosphate + 2 H2O + H(+). It functions in the pathway cofactor biosynthesis; thiamine diphosphate biosynthesis. In terms of biological role, catalyzes the rearrangement of 1-deoxy-D-xylulose 5-phosphate (DXP) to produce the thiazole phosphate moiety of thiamine. Sulfur is provided by the thiocarboxylate moiety of the carrier protein ThiS. In vitro, sulfur can be provided by H(2)S. This is Thiazole synthase from Bartonella quintana (strain Toulouse) (Rochalimaea quintana).